The sequence spans 28 residues: Ornatin-D (28 aa).

Belongs to the ornatin family.

The protein localises to the secreted. In terms of biological role, potent inhibitor of fibrinogen interaction with platelet receptors expressed on glycoprotein IIb-IIIa complex. May prevent blood from clotting during either feeding and/or storage of ingested blood. The chain is Ornatin-D from Placobdella ornata (Turtle leech).